The following is a 440-amino-acid chain: uncharacterized protein (440 aa).

This is an uncharacterized protein from Rickettsia prowazekii (strain Madrid E).